The chain runs to 377 residues: MNNTEYYDRLGLSKDASQDEIKRAYRKLSKKYHPDINKEPGAEEKYKEILEAYETLSDAQKRAAYDQYGPDGANGFGGQGSFGGFDGGAGFGGFEDIFSSFFGGGATRNPNAPRQGDDLQYRVNLSFEEAVFGAEKEIHYNREVTCKTCSGSGAKPGTSPVTCGRCHGHGVINVDTQTPLGMMRRQVTCDVCHGTGQEIKDPCQTCHGTGREKQSHTVSVKIPAGVETGQQIRLAGQGEAGFNGGPYGDLFVVINVNPSDKFTRDGSTIYYTLNISFVQAALGDTVEVPTVHGNVEMVIPAGTQTGKTFRLKGKGAPRLRGGSQGDQLVTVKIVTPTKLNDAQKEALLAFAKASGDEKVAPQKKGFFNKVKDVLEDL.

Residues 5 to 69 (EYYDRLGLSK…QKRAAYDQYG (65 aa)) enclose the J domain. The segment at 133–215 (GAEKEIHYNR…CHGTGREKQS (83 aa)) adopts a CR-type zinc-finger fold. Residues C146, C149, C163, C166, C189, C192, C203, and C206 each coordinate Zn(2+). CXXCXGXG motif repeat units follow at residues 146-153 (CKTCSGSG), 163-170 (CGRCHGHG), 189-196 (CDVCHGTG), and 203-210 (CQTCHGTG).

This sequence belongs to the DnaJ family. Homodimer. Zn(2+) is required as a cofactor.

It localises to the cytoplasm. In terms of biological role, participates actively in the response to hyperosmotic and heat shock by preventing the aggregation of stress-denatured proteins and by disaggregating proteins, also in an autonomous, DnaK-independent fashion. Unfolded proteins bind initially to DnaJ; upon interaction with the DnaJ-bound protein, DnaK hydrolyzes its bound ATP, resulting in the formation of a stable complex. GrpE releases ADP from DnaK; ATP binding to DnaK triggers the release of the substrate protein, thus completing the reaction cycle. Several rounds of ATP-dependent interactions between DnaJ, DnaK and GrpE are required for fully efficient folding. Also involved, together with DnaK and GrpE, in the DNA replication of plasmids through activation of initiation proteins. In Streptococcus thermophilus (strain CNRZ 1066), this protein is Chaperone protein DnaJ.